Consider the following 146-residue polypeptide: Small ribosomal subunit protein uS15 (146 aa).

It belongs to the universal ribosomal protein uS15 family. Part of the 30S ribosomal subunit.

The sequence is that of Small ribosomal subunit protein uS15 from Picrophilus torridus (strain ATCC 700027 / DSM 9790 / JCM 10055 / NBRC 100828 / KAW 2/3).